The sequence spans 385 residues: Probable thioesterase PNKD (385 aa).

The segment covering 32–42 (KASQNRTRALQ) has biased composition (polar residues). The interval 32 to 56 (KASQNRTRALQSHSSPECKEEPEPL) is disordered. Residue Val121 is modified to Phosphoserine. Zn(2+) is bound by residues His172, His174, Asp176, His177, His229, Asp253, and His291.

This sequence belongs to the metallo-beta-lactamase superfamily. Glyoxalase II family. Isoform 2 interacts with the sarcomeric proteins, MRLC2, MYOM1 and ENO3. The cofactor is Zn(2+). Undergoes cleavage at the N-terminus. Expressed in many discrete areas of the brain.

Its subcellular location is the cell membrane. It is found in the mitochondrion. The protein localises to the cytoplasm. The enzyme catalyses a thioester + H2O = a thiol + a carboxylate + H(+). In terms of biological role, probable thioesterase that may play a role in cellular detoxification processes; it likely acts on a yet-unknown alpha-hydroxythioester substrate. In vitro, it is able to catalyze the hydrolysis of S-D-lactoyl-glutathione to form glutathione and D-lactic acid at very low rate, though this reaction is not physiologically relevant in vivo. In Mus musculus (Mouse), this protein is Probable thioesterase PNKD (Pnkd).